We begin with the raw amino-acid sequence, 511 residues long: Coatomer subunit delta (511 aa).

Residues 168 to 177 are compositionally biased toward basic and acidic residues; sequence QARRDAERQG. Residues 168-188 form a disordered region; that stretch reads QARRDAERQGKKAPGFGGFGS. Serine 223 is subject to Phosphoserine. Lysine 233 and lysine 241 each carry N6-acetyllysine. A Phosphoserine modification is found at serine 244. An MHD domain is found at 271-511; the sequence is MESVHMKIEE…TFLVDKYEIL (241 aa). 2 positions are modified to N6-acetyllysine: lysine 309 and lysine 351. Position 493 is a phosphoserine (serine 493).

This sequence belongs to the adaptor complexes medium subunit family. Delta-COP subfamily. Oligomeric complex that consists of at least the alpha, beta, beta', gamma, delta, epsilon and zeta subunits.

The protein resides in the cytoplasm. It localises to the golgi apparatus membrane. Its subcellular location is the cytoplasmic vesicle. The protein localises to the COPI-coated vesicle membrane. Its function is as follows. The coatomer is a cytosolic protein complex that binds to dilysine motifs and reversibly associates with Golgi non-clathrin-coated vesicles, which further mediate biosynthetic protein transport from the ER, via the Golgi up to the trans Golgi network. Coatomer complex is required for budding from Golgi membranes, and is essential for the retrograde Golgi-to-ER transport of dilysine-tagged proteins. In mammals, the coatomer can only be recruited by membranes associated to ADP-ribosylation factors (ARFs), which are small GTP-binding proteins; the complex also influences the Golgi structural integrity, as well as the processing, activity, and endocytic recycling of LDL receptors. In Rattus norvegicus (Rat), this protein is Coatomer subunit delta (Arcn1).